The primary structure comprises 255 residues: Aliphatic sulfonates import ATP-binding protein SsuB (255 aa).

The ABC transporter domain occupies 12-233 (LLLNAVSKHY…RLGSVRLAEL (222 aa)). 44 to 51 (GRSGGGKS) lines the ATP pocket.

It belongs to the ABC transporter superfamily. Aliphatic sulfonates importer (TC 3.A.1.17.2) family. The complex is composed of two ATP-binding proteins (SsuB), two transmembrane proteins (SsuC) and a solute-binding protein (SsuA).

Its subcellular location is the cell inner membrane. It carries out the reaction ATP + H2O + aliphatic sulfonate-[sulfonate-binding protein]Side 1 = ADP + phosphate + aliphatic sulfonateSide 2 + [sulfonate-binding protein]Side 1.. Its function is as follows. Part of the ABC transporter complex SsuABC involved in aliphatic sulfonates import. Responsible for energy coupling to the transport system. This is Aliphatic sulfonates import ATP-binding protein SsuB from Escherichia coli (strain K12).